We begin with the raw amino-acid sequence, 498 residues long: Galactose-1-phosphate uridylyltransferase (498 aa).

Belongs to the galactose-1-phosphate uridylyltransferase type 2 family.

The protein resides in the cytoplasm. The enzyme catalyses alpha-D-galactose 1-phosphate + UDP-alpha-D-glucose = alpha-D-glucose 1-phosphate + UDP-alpha-D-galactose. Its pathway is carbohydrate metabolism; galactose metabolism. In Staphylococcus carnosus (strain TM300), this protein is Galactose-1-phosphate uridylyltransferase.